The following is a 1506-amino-acid chain: Condensin-2 complex subunit D3 (1506 aa).

A disordered region spans residues 154-194; the sequence is SNLTQKRKKDHSKSSKDNYRKSRKRGKPPRKEDYQVDELSR. HEAT repeat units follow at residues 442 to 476, 532 to 567, and 574 to 605; these read HKFF…LELS, PGER…LKHC, and QDLL…VMAQ. Ser-562 bears the Phosphoserine mark. The span at 884–897 shows a compositional bias: polar residues; the sequence is SDHLPSSQGTTDAL. Residues 884–908 are disordered; sequence SDHLPSSQGTTDALDSQPPFQPRSS. An HEAT 4 repeat occupies 968-1004; the sequence is TVMVDNYIPNISVCLKDSDPFIRKQTLVLLTNLLQEE. Positions 1213–1270 form a coiled coil; that stretch reads ALRELMNYLREVMQDYRDEINDFFAVDKQLASELEYDMKKYNEQLAQEQALTEHANAT. The tract at residues 1317 to 1353 is disordered; that stretch reads QDNADVPPTQSRPSAPRSNFTPTLPPISENGPLKIMS. A compositionally biased stretch (polar residues) spans 1324–1338; sequence PTQSRPSAPRSNFTP. 4 positions are modified to phosphoserine: Ser-1359, Ser-1368, Ser-1381, and Ser-1393. Disordered stretches follow at residues 1385 to 1412 and 1473 to 1506; these read LPFN…ESDR and PQSP…KTAN. A compositionally biased stretch (low complexity) spans 1393–1405; that stretch reads SPENPSSHESSLS. Positions 1492–1506 are enriched in basic residues; the sequence is SSRRSLRKAPLKTAN.

As to quaternary structure, component of the condensin-2 complex, which contains the SMC2 and SMC4 heterodimer, and 3 non SMC subunits that probably regulate the complex: NCAPH2, NCAPD3 and NCAPG2.

The protein localises to the nucleus. Regulatory subunit of the condensin-2 complex, a complex which establishes mitotic chromosome architecture and is involved in physical rigidity of the chromatid axis. May promote the resolution of double-strand DNA catenanes (intertwines) between sister chromatids. Condensin-mediated compaction likely increases tension in catenated sister chromatids, providing directionality for type II topoisomerase-mediated strand exchanges toward chromatid decatenation. Specifically required for decatenation of centromeric ultrafine DNA bridges during anaphase. Early in neurogenesis, may play an essential role to ensure accurate mitotic chromosome condensation in neuron stem cells, ultimately affecting neuron pool and cortex size. The chain is Condensin-2 complex subunit D3 (Ncapd3) from Mus musculus (Mouse).